The primary structure comprises 209 residues: Uracil phosphoribosyltransferase (209 aa).

Residues Arg79, Arg104, and 131–139 (DPMLATGGS) contribute to the 5-phospho-alpha-D-ribose 1-diphosphate site. Uracil-binding positions include Ile194 and 199–201 (GDA). Asp200 contributes to the 5-phospho-alpha-D-ribose 1-diphosphate binding site.

Belongs to the UPRTase family. The cofactor is Mg(2+).

It catalyses the reaction UMP + diphosphate = 5-phospho-alpha-D-ribose 1-diphosphate + uracil. Its pathway is pyrimidine metabolism; UMP biosynthesis via salvage pathway; UMP from uracil: step 1/1. Allosterically activated by GTP. Its function is as follows. Catalyzes the conversion of uracil and 5-phospho-alpha-D-ribose 1-diphosphate (PRPP) to UMP and diphosphate. This is Uracil phosphoribosyltransferase from Clostridioides difficile (strain 630) (Peptoclostridium difficile).